The primary structure comprises 407 residues: 1-deoxy-D-xylulose 5-phosphate reductoisomerase (407 aa).

NADPH-binding residues include Thr25, Gly26, Ser27, Ile28, Asn53, and Asn136. Lys137 serves as a coordination point for 1-deoxy-D-xylulose 5-phosphate. Glu138 lines the NADPH pocket. Mn(2+) is bound at residue Asp162. 1-deoxy-D-xylulose 5-phosphate-binding residues include Ser163, Glu164, Ser188, and His211. Glu164 contributes to the Mn(2+) binding site. Gly217 is a binding site for NADPH. The 1-deoxy-D-xylulose 5-phosphate site is built by Ser224, Asn229, Lys230, and Glu233. Glu233 is a binding site for Mn(2+).

Belongs to the DXR family. It depends on Mg(2+) as a cofactor. Mn(2+) serves as cofactor.

It catalyses the reaction 2-C-methyl-D-erythritol 4-phosphate + NADP(+) = 1-deoxy-D-xylulose 5-phosphate + NADPH + H(+). It functions in the pathway isoprenoid biosynthesis; isopentenyl diphosphate biosynthesis via DXP pathway; isopentenyl diphosphate from 1-deoxy-D-xylulose 5-phosphate: step 1/6. Functionally, catalyzes the NADPH-dependent rearrangement and reduction of 1-deoxy-D-xylulose-5-phosphate (DXP) to 2-C-methyl-D-erythritol 4-phosphate (MEP). This Rhodopseudomonas palustris (strain BisB18) protein is 1-deoxy-D-xylulose 5-phosphate reductoisomerase.